The primary structure comprises 259 residues: Tryptophan synthase alpha chain (259 aa).

Active-site proton acceptor residues include glutamate 48 and aspartate 59.

Belongs to the TrpA family. Tetramer of two alpha and two beta chains.

The catalysed reaction is (1S,2R)-1-C-(indol-3-yl)glycerol 3-phosphate + L-serine = D-glyceraldehyde 3-phosphate + L-tryptophan + H2O. The protein operates within amino-acid biosynthesis; L-tryptophan biosynthesis; L-tryptophan from chorismate: step 5/5. In terms of biological role, the alpha subunit is responsible for the aldol cleavage of indoleglycerol phosphate to indole and glyceraldehyde 3-phosphate. The polypeptide is Tryptophan synthase alpha chain (Syntrophomonas wolfei subsp. wolfei (strain DSM 2245B / Goettingen)).